Consider the following 422-residue polypeptide: Glucose-1-phosphate adenylyltransferase (422 aa).

Alpha-D-glucose 1-phosphate contacts are provided by residues Tyr-108, Gly-173, 188–189, and Ser-206; that span reads EK.

Belongs to the bacterial/plant glucose-1-phosphate adenylyltransferase family. In terms of assembly, homotetramer.

The catalysed reaction is alpha-D-glucose 1-phosphate + ATP + H(+) = ADP-alpha-D-glucose + diphosphate. Its pathway is glycan biosynthesis; glycogen biosynthesis. Its function is as follows. Involved in the biosynthesis of ADP-glucose, a building block required for the elongation reactions to produce glycogen. Catalyzes the reaction between ATP and alpha-D-glucose 1-phosphate (G1P) to produce pyrophosphate and ADP-Glc. The protein is Glucose-1-phosphate adenylyltransferase of Paraburkholderia phymatum (strain DSM 17167 / CIP 108236 / LMG 21445 / STM815) (Burkholderia phymatum).